Here is a 225-residue protein sequence, read N- to C-terminus: NAD(P)H-quinone oxidoreductase subunit K, chloroplastic (225 aa).

[4Fe-4S] cluster is bound by residues cysteine 43, cysteine 44, cysteine 108, and cysteine 139.

This sequence belongs to the complex I 20 kDa subunit family. NDH is composed of at least 16 different subunits, 5 of which are encoded in the nucleus. Requires [4Fe-4S] cluster as cofactor.

It is found in the plastid. Its subcellular location is the chloroplast thylakoid membrane. The enzyme catalyses a plastoquinone + NADH + (n+1) H(+)(in) = a plastoquinol + NAD(+) + n H(+)(out). It catalyses the reaction a plastoquinone + NADPH + (n+1) H(+)(in) = a plastoquinol + NADP(+) + n H(+)(out). NDH shuttles electrons from NAD(P)H:plastoquinone, via FMN and iron-sulfur (Fe-S) centers, to quinones in the photosynthetic chain and possibly in a chloroplast respiratory chain. The immediate electron acceptor for the enzyme in this species is believed to be plastoquinone. Couples the redox reaction to proton translocation, and thus conserves the redox energy in a proton gradient. This chain is NAD(P)H-quinone oxidoreductase subunit K, chloroplastic, found in Liriodendron tulipifera (Tuliptree).